A 455-amino-acid chain; its full sequence is T-box protein VegT-B (455 aa).

The T-box DNA-binding region spans 57–230 (LWTQFHQEGT…HNPFAKGFRE (174 aa)). Over residues 229–241 (REQERSHKRDDVL) the composition is skewed to basic and acidic residues. Disordered stretches follow at residues 229 to 276 (REQE…RIKE) and 295 to 350 (ANQG…RRLT). Residues 308 to 326 (GVNQEQQVPTSSSNFYIKS) are compositionally biased toward polar residues.

In terms of assembly, forms a repression complex on the promoters of the nodal/nr1 and siamois genes with the maternal factors tcf7l1/tcf3 and pouf5.1/oct-25. Interacts (via C-terminus) with tcf7l1/tcf3 (via N-terminus). Also interacts with the other POU-domain transcription factors pou5f1.2/oct-91 and pou5f1.3/oct-60. In terms of tissue distribution, maternally localized to the vegetal hemisphere of oocytes. Zygotic expression parallels blastopore formation and shifts from dorsal expression in the marginal zone of late blastula and early gastrula stages to a ventral/lateral expression at later stages. During neurula and tailbud stages, expressed in the posterior and anterior ends of the embryo. During tailbud stages, expressed in a subset of interneurons in the neural tube.

The protein localises to the nucleus. Transcription factor required for both mesoderm and endoderm formation in the embryo; signaling determinants and concentration levels may determine which germ layer is formed. Acts together with beta-catenin to activate genes that are responsible for mesoderm induction including wnt-8, eomes t/bra, siamois, mix1 and sox17. Directly binds to promoter DNA. Patterns the mesoderm along the dorsoventral and posterior axis. Activates siamois gene transcription when alone or in combination with beta-catenin, but inhibits siamois transcription in combination with pou5f1.1/oct-25. This is T-box protein VegT-B (vegt-b) from Xenopus laevis (African clawed frog).